The following is a 179-amino-acid chain: Alkyl hydroperoxide reductase AhpD (179 aa).

The active-site Proton donor is the cysteine 130. A disulfide bridge connects residues cysteine 130 and cysteine 133. Cysteine 133 functions as the Cysteine sulfenic acid (-SOH) intermediate in the catalytic mechanism.

It belongs to the AhpD family. As to quaternary structure, homotrimer.

The enzyme catalyses N(6)-[(R)-dihydrolipoyl]-L-lysyl-[lipoyl-carrier protein] + a hydroperoxide = N(6)-[(R)-lipoyl]-L-lysyl-[lipoyl-carrier protein] + an alcohol + H2O. Its function is as follows. Antioxidant protein with alkyl hydroperoxidase activity. Required for the reduction of the AhpC active site cysteine residues and for the regeneration of the AhpC enzyme activity. The sequence is that of Alkyl hydroperoxide reductase AhpD from Rhodococcus erythropolis (strain PR4 / NBRC 100887).